The primary structure comprises 368 residues: Aminomethyltransferase (368 aa).

This sequence belongs to the GcvT family. As to quaternary structure, the glycine cleavage system is composed of four proteins: P, T, L and H.

It catalyses the reaction N(6)-[(R)-S(8)-aminomethyldihydrolipoyl]-L-lysyl-[protein] + (6S)-5,6,7,8-tetrahydrofolate = N(6)-[(R)-dihydrolipoyl]-L-lysyl-[protein] + (6R)-5,10-methylene-5,6,7,8-tetrahydrofolate + NH4(+). The glycine cleavage system catalyzes the degradation of glycine. This Xylella fastidiosa (strain M12) protein is Aminomethyltransferase.